The sequence spans 118 residues: MVARVWSLMRFLIKGSVAGGAVYLVYDQELLGPSDKSQAALQKAGEVVPPAMYQFSQYVCQQTGLQIPQLPAPPKIYFPIRDSWNAGIMTVMSALSVAPSKAREYSKEGWEYVKARTK.

The Mitochondrial matrix portion of the chain corresponds to 1 to 7 (MVARVWS). Residues 8 to 26 (LMRFLIKGSVAGGAVYLVY) traverse the membrane as a helical segment. Residues 27–118 (DQELLGPSDK…GWEYVKARTK (92 aa)) are Mitochondrial intermembrane-facing.

It belongs to the MICOS complex subunit Mic13 family. Component of the mitochondrial contact site and cristae organizing system (MICOS) complex, composed of at least MICOS10/MIC10, CHCHD3/MIC19, CHCHD6/MIC25, APOO/MIC26, MICOS13/MIC13, APOOL/MIC27 and IMMT/MIC60. The MICOS complex associates with mitochondrial outer membrane proteins SAMM50, MTX1 and MTX2 (together described as components of the mitochondrial outer membrane sorting assembly machinery (SAM) complex) and DNAJC11, mitochondrial inner membrane protein TMEM11 and with HSPA9. The MICOS and SAM complexes together with DNAJC11 are part of a large protein complex spanning both membranes termed the mitochondrial intermembrane space bridging (MIB) complex.

The protein localises to the mitochondrion inner membrane. Component of the MICOS complex, a large protein complex of the mitochondrial inner membrane that plays crucial roles in the maintenance of crista junctions, inner membrane architecture, and formation of contact sites to the outer membrane. Constituent of mature MICOS complex, it is required for the formation of cristae junction (CJ) and maintenance of cristae morphology. Required for the incorporation of MICOS10/MIC10 into the MICOS complex. This is MICOS complex subunit MIC13 from Homo sapiens (Human).